The following is a 79-amino-acid chain: Putative membrane protein insertion efficiency factor (79 aa).

Belongs to the UPF0161 family.

It localises to the cell inner membrane. Its function is as follows. Could be involved in insertion of integral membrane proteins into the membrane. In Prochlorococcus marinus (strain NATL1A), this protein is Putative membrane protein insertion efficiency factor.